We begin with the raw amino-acid sequence, 118 residues long: MNEHNLLIFCLKDNVSISEYTEMIDWAYKNIQSETVVEITENQIIEYQNRGLWRLVSEITDNWLFGPSEGDWLIDKESILAVKEKLQNSDFSTEPLVKNIIHVLEYAIKNEKTVIFHF.

Belongs to the DMP12-like protein family. In terms of assembly, monomer. Interacts with the dimeric form of the DNA-binding protein HU.

In terms of biological role, acts as a DNA mimic. Interacts with the DNA-binding protein HU and partially prevents the binding of HU protein to DNA by occupying the DNA binding sites on the protein. However, the relatively weak affinity of DMP12 for HU suggests that it may not completely block the HU protein-DNA binding, and that DMP12 is more likely to act as a regulator than a competitive inhibitor. It protects HU protein from limited digestion by trypsin in a limited trypsin digestion assay, suggesting that it may serve to protect the HU protein and improve the stability of unbound HU protein. In Neisseria meningitidis serogroup B (strain ATCC BAA-335 / MC58), this protein is DNA mimic protein DMP12.